A 457-amino-acid chain; its full sequence is Cysteine--tRNA ligase (457 aa).

Cys-28 contacts Zn(2+). The short motif at 30–40 is the 'HIGH' region element; it reads MTVYDLCHIGH. Zn(2+) contacts are provided by Cys-209, His-234, and Glu-238. The 'KMSKS' region signature appears at 266 to 270; sequence KMSKS. Residue Lys-269 coordinates ATP.

The protein belongs to the class-I aminoacyl-tRNA synthetase family. In terms of assembly, monomer. Requires Zn(2+) as cofactor.

It localises to the cytoplasm. It catalyses the reaction tRNA(Cys) + L-cysteine + ATP = L-cysteinyl-tRNA(Cys) + AMP + diphosphate. In Chromobacterium violaceum (strain ATCC 12472 / DSM 30191 / JCM 1249 / CCUG 213 / NBRC 12614 / NCIMB 9131 / NCTC 9757 / MK), this protein is Cysteine--tRNA ligase.